Consider the following 75-residue polypeptide: Exodeoxyribonuclease 7 small subunit (75 aa).

It belongs to the XseB family. In terms of assembly, heterooligomer composed of large and small subunits.

It localises to the cytoplasm. The catalysed reaction is Exonucleolytic cleavage in either 5'- to 3'- or 3'- to 5'-direction to yield nucleoside 5'-phosphates.. In terms of biological role, bidirectionally degrades single-stranded DNA into large acid-insoluble oligonucleotides, which are then degraded further into small acid-soluble oligonucleotides. This is Exodeoxyribonuclease 7 small subunit from Elusimicrobium minutum (strain Pei191).